The sequence spans 177 residues: Large ribosomal subunit protein uL6 (177 aa).

Belongs to the universal ribosomal protein uL6 family. Part of the 50S ribosomal subunit.

Its function is as follows. This protein binds to the 23S rRNA, and is important in its secondary structure. It is located near the subunit interface in the base of the L7/L12 stalk, and near the tRNA binding site of the peptidyltransferase center. This Vibrio vulnificus (strain CMCP6) protein is Large ribosomal subunit protein uL6.